We begin with the raw amino-acid sequence, 388 residues long: Succinate--CoA ligase [ADP-forming] subunit beta (388 aa).

An ATP-grasp domain is found at 9–244 (KAIFRSMGVA…LEEEDPKEIE (236 aa)). Residues lysine 46, 53-55 (GRG), glutamate 99, cysteine 102, and glutamate 107 each bind ATP. Mg(2+) is bound by residues asparagine 199 and aspartate 213. Substrate contacts are provided by residues asparagine 264 and 321–323 (GIM).

The protein belongs to the succinate/malate CoA ligase beta subunit family. In terms of assembly, heterotetramer of two alpha and two beta subunits. It depends on Mg(2+) as a cofactor.

It carries out the reaction succinate + ATP + CoA = succinyl-CoA + ADP + phosphate. The catalysed reaction is GTP + succinate + CoA = succinyl-CoA + GDP + phosphate. Its pathway is carbohydrate metabolism; tricarboxylic acid cycle; succinate from succinyl-CoA (ligase route): step 1/1. Its function is as follows. Succinyl-CoA synthetase functions in the citric acid cycle (TCA), coupling the hydrolysis of succinyl-CoA to the synthesis of either ATP or GTP and thus represents the only step of substrate-level phosphorylation in the TCA. The beta subunit provides nucleotide specificity of the enzyme and binds the substrate succinate, while the binding sites for coenzyme A and phosphate are found in the alpha subunit. This is Succinate--CoA ligase [ADP-forming] subunit beta from Staphylococcus saprophyticus subsp. saprophyticus (strain ATCC 15305 / DSM 20229 / NCIMB 8711 / NCTC 7292 / S-41).